We begin with the raw amino-acid sequence, 282 residues long: Pantothenate synthetase (282 aa).

ATP is bound at residue 30 to 37 (MGFLHDGH). Residue H37 is the Proton donor of the active site. Q60 provides a ligand contact to (R)-pantoate. Residue Q60 coordinates beta-alanine. Position 146-149 (146-149 (GQKD)) interacts with ATP. Position 152 (Q152) interacts with (R)-pantoate. Residues I175 and 183–186 (KSSR) each bind ATP.

Belongs to the pantothenate synthetase family. Homodimer.

Its subcellular location is the cytoplasm. It catalyses the reaction (R)-pantoate + beta-alanine + ATP = (R)-pantothenate + AMP + diphosphate + H(+). Its pathway is cofactor biosynthesis; (R)-pantothenate biosynthesis; (R)-pantothenate from (R)-pantoate and beta-alanine: step 1/1. In terms of biological role, catalyzes the condensation of pantoate with beta-alanine in an ATP-dependent reaction via a pantoyl-adenylate intermediate. The polypeptide is Pantothenate synthetase (Campylobacter jejuni subsp. jejuni serotype O:6 (strain 81116 / NCTC 11828)).